We begin with the raw amino-acid sequence, 778 residues long: uncharacterized protein (778 aa).

The region spanning 1-92 is the PE domain; the sequence is MSFVIAVPEA…GARSYVVAEA (92 aa). 3 disordered regions span residues 125 to 163, 372 to 510, and 718 to 778; these read ADGT…AGLI, TGLA…GDAF, and QGGL…GADG. Gly residues-rich tracts occupy residues 402-429, 436-510, and 718-763; these read NQTG…GGLG, DGTG…GDAF, and QGGL…GSSG.

This sequence belongs to the mycobacterial PE family. PGRS subfamily.

This is an uncharacterized protein from Mycobacterium bovis (strain ATCC BAA-935 / AF2122/97).